A 322-amino-acid polypeptide reads, in one-letter code: uncharacterized protein (322 aa).

Low complexity predominate over residues M1–S17. The interval M1 to L22 is disordered. A2 carries the N-acetylalanine modification. S37 bears the Phosphoserine mark. The disordered stretch occupies residues A81–Q104. S130 bears the Phosphoserine mark. 2 stretches are compositionally biased toward polar residues: residues Q142 to A153 and Q161 to L177. Residues Q142–A301 are disordered. At S176 the chain carries Phosphoserine. Residues A183–P203 are compositionally biased toward basic and acidic residues. A compositionally biased stretch (polar residues) spans Q245–A255.

Its subcellular location is the cytoplasm. This is an uncharacterized protein from Mus musculus (Mouse).